We begin with the raw amino-acid sequence, 1293 residues long: Galactose/N-acetyl-D-galactosamine lectin heavy subunit 1 (1293 aa).

The signal sequence occupies residues 1-15; that stretch reads MKLLLLNILLLCCLA. Over 16-1234 the chain is Extracellular; sequence DKLNEFSADI…NNVGAIAAAT (1219 aa). 16 N-linked (GlcNAc...) asparagine glycosylation sites follow: N95, N198, N234, N261, N337, N377, N390, N468, N487, N643, N659, N890, N992, N1138, N1204, and N1214. Residues 1235–1255 form a helical membrane-spanning segment; that stretch reads TVAVVVVAVVVALIVVSIGLF. Topologically, residues 1256–1293 are cytoplasmic; that stretch reads KTYQLVSSAMKNAITITNENAEYVGADNEATNAATFNG.

Heterodimer composed of a 170 kDa heavy subunit (hgl) and a 31/35 kDa light subunit (lgl); disulfide-linked. Post-translationally, N-glycosylated.

The protein localises to the cell membrane. Its function is as follows. Lectin which binds galactose and N-acetyl-D-galactosamine of host glycoproteins and thus mediates adhesion to host cells. Mediates adherence to host colonic mucins, an essential step for pathogenic tissue invasion. This Entamoeba histolytica (strain ATCC 30459 / HM-1:IMSS / ABRM) protein is Galactose/N-acetyl-D-galactosamine lectin heavy subunit 1.